The primary structure comprises 549 residues: Cation/acetate symporter ActP (549 aa).

The Periplasmic portion of the chain corresponds to 1-32; it reads MKRVLTALAATLPFAANAADAISGAVERQPTN. The helical transmembrane segment at 33–55 threads the bilayer; it reads WQAIIMFLIFVVFTLGITYWASK. At 56–75 the chain is on the cytoplasmic side; that stretch reads RVRSRNDYYTAGGNITGFQN. Residues 76–98 form a helical membrane-spanning segment; sequence GLAIAGDYMSAASFLGISALVFT. The Periplasmic segment spans residues 99 to 102; sequence SGYD. The chain crosses the membrane as a helical span at residues 103–125; sequence GLIYSLGFLVGWPIILFLIAERL. The Cytoplasmic portion of the chain corresponds to 126–145; it reads RNLGRYTFADVASYRLKQGP. The helical transmembrane segment at 146-168 threads the bilayer; it reads IRILSACGSLVVVALYLIAQMVG. Topologically, residues 169-182 are periplasmic; that stretch reads AGKLIELLFGLNYH. A helical transmembrane segment spans residues 183 to 205; it reads IAVVLVGVLMMMYVLFGGMLATT. The Cytoplasmic portion of the chain corresponds to 206–211; sequence WVQIIK. The chain crosses the membrane as a helical span at residues 212–234; the sequence is AVLLLFGASFMAFMVMKHVGFSF. The Periplasmic portion of the chain corresponds to 235-263; sequence NNLFSEAMAVHPKGVDIMKPGGLVKDPIS. A helical membrane pass occupies residues 264–286; that stretch reads ALSLGLGLMFGTAGLPHILMHFF. Residues 287-297 are Cytoplasmic-facing; that stretch reads TVSDAREARKS. Residues 298-320 form a helical membrane-spanning segment; the sequence is VFYATGFMGYFYILTFIIGFGAI. Topologically, residues 321-358 are periplasmic; the sequence is MLVGANPEYKDAAGHLIGGNNMAAVHLANAVGGNLFLG. A helical membrane pass occupies residues 359-381; that stretch reads FISAVAFATILAVVAGLTLAGAS. Over 382 to 401 the chain is Cytoplasmic; it reads AVSHDLYANVFKKGATEREE. The helical transmembrane segment at 402–424 threads the bilayer; that stretch reads LRVSKITVLILGVIAIILGVLFE. Residues 425–427 lie on the Periplasmic side of the membrane; the sequence is NQN. Residues 428–450 traverse the membrane as a helical segment; the sequence is IAFMVGLAFAIAASCNFPIILLS. Over 451 to 461 the chain is Cytoplasmic; the sequence is MYWSKLTTRGA. A helical membrane pass occupies residues 462-484; it reads MLGGWLGLITAVVLMILGPTIWV. The Periplasmic portion of the chain corresponds to 485 to 493; the sequence is QILGHEKAI. The helical transmembrane segment at 494–516 threads the bilayer; it reads FPYEYPALFSISVAFLGIWLFSA. Residues 517–549 are Cytoplasmic-facing; sequence TDNSAEGARERELFRAQFIRSQTGFGVEQGRAH.

It belongs to the sodium:solute symporter (SSF) (TC 2.A.21) family.

Its subcellular location is the cell inner membrane. Transports acetate. This chain is Cation/acetate symporter ActP (actP), found in Escherichia coli O6:H1 (strain CFT073 / ATCC 700928 / UPEC).